Consider the following 299-residue polypeptide: DNA-binding transcriptional repressor CapW (299 aa).

Positions 1-84 (MESSGSSKVR…EFKPITKRSE (84 aa)) are winged HTH domain. The WYL domain stretch occupies residues 85–196 (ATRYLNELQR…IGRLDVLEHV (112 aa)). One can recognise a WYL domain in the interval 120 to 200 (SRAIEADEVA…DVLEHVFSAK (81 aa)). The interval 145 to 189 (YQSMDAPEPQEWVLSPHALGFDGLRWHARAWCHARQVFRDFAIGR) is probable ligand-binding region. Residues 197 to 299 (FSAKPVDPLL…DRDGLQHLRR (103 aa)) are WCX domain.

Homodimer.

In terms of biological role, transcriptional regulator of a CBASS antivirus system. CBASS (cyclic oligonucleotide-based antiphage signaling system) provides immunity against bacteriophage. The CD-NTase protein synthesizes cyclic nucleotides in response to infection; these serve as specific second messenger signals. The signals activate a diverse range of effectors, leading to bacterial cell death and thus abortive phage infection. A type III CBASS system, part of a CapW-Cap6-Cap8-Cap7-CdnC-NucC locus. Binds specifically to palindromes that overlap the -10 site in the promoter of cap6, found beween found between the genes for divergently transcribed capW and cap6 (cognate DNA). Probably represses transcription bidirectionally from the promoter. Mutations that make it a constitutive repressor in E.coli do not change DNA-binding affinity. The polypeptide is DNA-binding transcriptional repressor CapW (Stenotrophomonas maltophilia (Pseudomonas maltophilia)).